Here is a 263-residue protein sequence, read N- to C-terminus: 3-methyl-2-oxobutanoate hydroxymethyltransferase (263 aa).

Asp-45 and Asp-84 together coordinate Mg(2+). 3-methyl-2-oxobutanoate-binding positions include Asp-45–Ser-46, Asp-84, and Lys-112. Position 114 (Glu-114) interacts with Mg(2+). Residue Glu-180 is the Proton acceptor of the active site.

It belongs to the PanB family. As to quaternary structure, homodecamer; pentamer of dimers. Mg(2+) is required as a cofactor.

It is found in the cytoplasm. The enzyme catalyses 3-methyl-2-oxobutanoate + (6R)-5,10-methylene-5,6,7,8-tetrahydrofolate + H2O = 2-dehydropantoate + (6S)-5,6,7,8-tetrahydrofolate. It participates in cofactor biosynthesis; (R)-pantothenate biosynthesis; (R)-pantoate from 3-methyl-2-oxobutanoate: step 1/2. Catalyzes the reversible reaction in which hydroxymethyl group from 5,10-methylenetetrahydrofolate is transferred onto alpha-ketoisovalerate to form ketopantoate. The sequence is that of 3-methyl-2-oxobutanoate hydroxymethyltransferase from Citrobacter koseri (strain ATCC BAA-895 / CDC 4225-83 / SGSC4696).